The following is a 30-amino-acid chain: Conopeptide Vi002 (30 aa).

Expressed by the venom gland.

It is found in the secreted. The sequence is that of Conopeptide Vi002 from Conus virgo (Virgin cone).